A 485-amino-acid polypeptide reads, in one-letter code: MLRIYNSLTRRKEEFIPIESGKVRMYVCGMTVYDLCHVGHARVMVVFDMVVRYLRASGFEVIYVRNITDIDDKIIHRANERGESIHTLTARYIQALHEDEASLQILPPDREPRATESMEAILAMVRQLLDQGYAYQGENGDIYYDVSHFEGYGALSGRHLEDLRAGERVQVNEAKTDPLDFVLWKAAKSGEPAWESPWGPGRPGWHIECSAMSIQELGTHFDIHGGGQDLQFPHHENEIAQSEAATGGKFVNYWMHNGFVRLNDEKMSKSLGNFFTVREVLEHYHPEVLRYFILSSHYRSPLNYTKQQLDTAKAAMTRLYTALRGIPRGEDRASAQGLSWEFTDGGDPFVLRFREAMDDDFNTPEALALLNEVRHALNRAREAGDTEKGQSLAVLLRSLGGILGLLAHEPEQFLRDSRQVAAIPDTAAAGEEAVLSHDGIEQLVAQRTVARKNKDWAEADRIRGILKDQGITLEDTAAGTLWRRG.

Cys-28 contacts Zn(2+). The 'HIGH' region signature appears at 30–40 (MTVYDLCHVGH). The Zn(2+) site is built by Cys-209, His-234, and Glu-238. Positions 266–270 (KMSKS) match the 'KMSKS' region motif. Lys-269 lines the ATP pocket.

The protein belongs to the class-I aminoacyl-tRNA synthetase family. In terms of assembly, monomer. Requires Zn(2+) as cofactor.

The protein resides in the cytoplasm. The catalysed reaction is tRNA(Cys) + L-cysteine + ATP = L-cysteinyl-tRNA(Cys) + AMP + diphosphate. This is Cysteine--tRNA ligase from Nitrosococcus oceani (strain ATCC 19707 / BCRC 17464 / JCM 30415 / NCIMB 11848 / C-107).